Consider the following 509-residue polypeptide: Cytochrome P450 monooxygenase LUC2 (509 aa).

The chain crosses the membrane as a helical span at residues 30–50; it reads TKVLVTFLTIVIIAPRVFTVI. C456 is a heme binding site.

Belongs to the cytochrome P450 family. Heme serves as cofactor.

It is found in the membrane. It participates in mycotoxin biosynthesis. In terms of biological role, cytochrome P450 monooxygenase; part of the gene cluster that mediates the biosynthesis of the mycotoxin lucilactaene and the lucilactaene-related compound NG-391 that act as cell cycle inhibitors with potent growth inhibitory activity against malarial parasites, moderate growth inhibitory activity against cancer cells, and no activity against bacteria and fungi. Within the pathway, LUC2 performs C-20 methyl group hydroxylation of several intermediates. LUC2 does not perform the full oxidation of the C-20 methyl group into carboxylic acid, which is a prerequisite for the final methylation step. The pathway begins with the hybrid PKS-NRPS synthetase LUC5 which is responsible for the condensation of one acetyl-coenzyme A (CoA) unit with six malonyl-CoA units and the amide linkage of the arising heptaketide and homoserine, subsequently releasing the first intermediate prelucilactaene B. Both the cytochrome P450 monooxygenase LUC2 and the hydrolase LUC6 function in parallel in modification of prelucilactaene B. LUC6 may catalyze the 2-pyrrolidone ring formation to form prelucilactaene C from prelucilactaene B, followed by C-15 hydroxylation by the same enzyme to give prelucilactaene D, which is then converted to prelucilactaene E by epoxidation, and finally to prelucilactaene F by cyclization. Prelucilactane D, prelucilactaene E, and prelucilactaene F can be converted to dihydrolucilactaene, NG391, and lucilactaene, respectively, via C-20 methyl group hydroxylation by the cytochrome P450 monooxygenase LUC2. However, LUC2, unlike FUS8 in fusarin C biosynthesis, is not enough for the full oxidation of the C-20 methyl group into carboxylic acid, which is a prerequisite for the final methylation step. The aldehyde dehydrogenase LUC3 is involved in the biosynthesis by further oxidation of the C-20 alcoholic analog prelucilactaene G into a carboxylic derivative. This unidentified carboxylic derivative may be converted to demethyllucilactaene. As the last step, the methyltransferase LUC1 methylates the hydroxyl group at C-21 of demethyllucilactaene to generate lucilactaene. The chain is Cytochrome P450 monooxygenase LUC2 from Fusarium sp.